Consider the following 424-residue polypeptide: Lactate racemase (424 aa).

A Ni(II)-pyridinium-3,5-bisthiocarboxylate mononucleotide-binding site is contributed by Asp-72–Arg-75. Catalysis depends on proton donor/acceptor residues His-108 and His-174. Ni(II)-pyridinium-3,5-bisthiocarboxylate mononucleotide is bound by residues Lys-184 and His-200. Substrate-binding residues include Gln-295 and Lys-298.

Belongs to the lactate racemase family. As to quaternary structure, homodimer. Requires Ni(II)-pyridinium-3,5-bisthiocarboxylate mononucleotide as cofactor.

The enzyme catalyses (S)-lactate = (R)-lactate. Activation of the apo-enzyme requires the three accessory proteins LarB, LarE and LarC, that are involved in the biosynthesis of the nickel-pincer cofactor of LarA. Inhibited by sulfite that behaves as a mixed inhibitor. Catalyzes the interconversion between the D- and L-isomers of lactate. May act as a rescue enzyme to ensure D-lactate production in physiological conditions where its production by the D-lactate dehydrogenase LdhD is not sufficient. D-Lactate is absolutely required for growth of L.plantarum and is an essential component of the cell wall peptidoglycan in this species, where it is incorporated as the last residue of the muramoyl-pentadepsipeptide peptidoglycan precursor; its incorporation confers high level of vancomycin resistance. The sequence is that of Lactate racemase from Lactiplantibacillus plantarum (strain ATCC BAA-793 / NCIMB 8826 / WCFS1) (Lactobacillus plantarum).